Here is a 232-residue protein sequence, read N- to C-terminus: MNNMTAIVPAAGVGSRMQADRPKQYLTLLDKTVLEHTVEHLLEHPLIEHVVVAVSADDPYFANLPLAHHPRVIRVDGGKERADSVLSALEYVCQHRLSEWVLVHDAARPCVTHADITQLITTALAHPIGAILASPVRDTMKRGDHLQQIVHTVDRTALWHALTPQMFRAQSLRERLFAALQQQVTITDEASAFEWRGEKPALVAGRADNLKITQPEDLALAEFYLSRNKEKS.

Belongs to the IspD/TarI cytidylyltransferase family. IspD subfamily.

The enzyme catalyses 2-C-methyl-D-erythritol 4-phosphate + CTP + H(+) = 4-CDP-2-C-methyl-D-erythritol + diphosphate. Its pathway is isoprenoid biosynthesis; isopentenyl diphosphate biosynthesis via DXP pathway; isopentenyl diphosphate from 1-deoxy-D-xylulose 5-phosphate: step 2/6. In terms of biological role, catalyzes the formation of 4-diphosphocytidyl-2-C-methyl-D-erythritol from CTP and 2-C-methyl-D-erythritol 4-phosphate (MEP). This is 2-C-methyl-D-erythritol 4-phosphate cytidylyltransferase from Vibrio cholerae serotype O1 (strain ATCC 39315 / El Tor Inaba N16961).